The chain runs to 117 residues: MARVKTGVVRRRRHKKVLKLARGFFSARRKHFRKAKEQVERSLVYSYRDRRNKKRDFRRLWIVRINAACRLNDISYSKFINALKKANIELDRKVLADLAMNDAAAFSAIVAQAKKVM.

It belongs to the bacterial ribosomal protein bL20 family.

Functionally, binds directly to 23S ribosomal RNA and is necessary for the in vitro assembly process of the 50S ribosomal subunit. It is not involved in the protein synthesizing functions of that subunit. The protein is Large ribosomal subunit protein bL20 of Campylobacter hominis (strain ATCC BAA-381 / DSM 21671 / CCUG 45161 / LMG 19568 / NCTC 13146 / CH001A).